A 297-amino-acid polypeptide reads, in one-letter code: Guanylate kinase (297 aa).

The Guanylate kinase-like domain maps to 5-184 (GKVIIISGPS…AVSKITDILI (180 aa)). An ATP-binding site is contributed by 12-19 (GPSGVGKG). The tract at residues 205 to 297 (ENIVDQKYTY…IKQRSDFSGD (93 aa)) is unknown.

Belongs to the guanylate kinase family.

The protein resides in the cytoplasm. The enzyme catalyses GMP + ATP = GDP + ADP. In terms of biological role, essential for recycling GMP and indirectly, cGMP. This Mesoplasma florum (strain ATCC 33453 / NBRC 100688 / NCTC 11704 / L1) (Acholeplasma florum) protein is Guanylate kinase (gmk).